A 504-amino-acid polypeptide reads, in one-letter code: Glycerol kinase (504 aa).

Thr14 is a binding site for ADP. Residues Thr14, Thr15, and Ser16 each contribute to the ATP site. Thr14 provides a ligand contact to sn-glycerol 3-phosphate. Arg18 contributes to the ADP binding site. Arg84, Glu85, Tyr136, and Asp246 together coordinate sn-glycerol 3-phosphate. Residues Arg84, Glu85, Tyr136, Asp246, and Gln247 each contribute to the glycerol site. ADP is bound by residues Thr268 and Gly311. Positions 268, 311, 315, and 412 each coordinate ATP. 2 residues coordinate ADP: Gly412 and Asn416.

Belongs to the FGGY kinase family.

It carries out the reaction glycerol + ATP = sn-glycerol 3-phosphate + ADP + H(+). It participates in polyol metabolism; glycerol degradation via glycerol kinase pathway; sn-glycerol 3-phosphate from glycerol: step 1/1. Inhibited by fructose 1,6-bisphosphate (FBP). Its function is as follows. Key enzyme in the regulation of glycerol uptake and metabolism. Catalyzes the phosphorylation of glycerol to yield sn-glycerol 3-phosphate. The polypeptide is Glycerol kinase (Aliivibrio fischeri (strain ATCC 700601 / ES114) (Vibrio fischeri)).